An 81-amino-acid polypeptide reads, in one-letter code: Neurotoxin LmNaTx11.1 (81 aa).

An N-terminal signal peptide occupies residues 1–18 (MKIVIIFFIAMMAVGVYS). In terms of domain architecture, LCN-type CS-alpha/beta spans 19 to 80 (KDGYLVKKNG…PTYPSSKTCS (62 aa)). 4 cysteine pairs are disulfide-bonded: Cys29–Cys79, Cys33–Cys56, Cys42–Cys61, and Cys46–Cys63.

It belongs to the long (4 C-C) scorpion toxin superfamily. Sodium channel inhibitor family. Beta subfamily. Expressed by the venom gland.

It is found in the secreted. Functionally, binds voltage-independently at site-4 of sodium channels (Nav) and shift the voltage of activation toward more negative potentials thereby affecting sodium channel activation and promoting spontaneous and repetitive firing. The protein is Neurotoxin LmNaTx11.1 of Lychas mucronatus (Chinese swimming scorpion).